Consider the following 310-residue polypeptide: S-adenosylmethionine-dependent nucleotide dehydratase (310 aa).

Residues 3–221 enclose the Radical SAM core domain; it reads PAIPPTINLH…VERHRKVESS (219 aa). [4Fe-4S] cluster is bound by residues Cys17, Cys21, and Cys24.

Belongs to the radical SAM superfamily. Viperin family. [4Fe-4S] cluster serves as cofactor.

It catalyses the reaction GTP + AH2 + S-adenosyl-L-methionine = 3'-deoxy-3',4'-didehydro-GTP + 5'-deoxyadenosine + L-methionine + A + H2O + H(+). In terms of biological role, expression of pVip15 in E.coli (strain MG1655) confers resistance to phage T7; prevents culture collapse upon infection. Catalyzes the conversion of guanosine triphosphate (GTP) to 3'-deoxy-3',4'-didehydro-GTP (ddhGTP), probably via a SAM-dependent radical mechanism. The modified nucleotide represses transcription from T7 RNA polymerase-directed genes (possibly by acting as chain terminators), strongly suggesting these nucleotides block viral polymerase transcription. This Coraliomargarita akajimensis (strain DSM 45221 / IAM 15411 / JCM 23193 / KCTC 12865 / 04OKA010-24) protein is S-adenosylmethionine-dependent nucleotide dehydratase.